The following is a 416-amino-acid chain: Adenylosuccinate synthetase (416 aa).

GTP is bound by residues 13-19 (GDEGKGK) and 41-43 (GHT). The active-site Proton acceptor is the aspartate 14. Positions 14 and 41 each coordinate Mg(2+). IMP contacts are provided by residues 14-17 (DEGK), 39-42 (NAGH), threonine 126, arginine 140, glutamine 220, threonine 235, and arginine 299. Residue histidine 42 is the Proton donor of the active site. Residue 295-301 (TTTGRRR) participates in substrate binding. GTP contacts are provided by residues arginine 301, 327 to 329 (KLD), and 405 to 407 (STS).

It belongs to the adenylosuccinate synthetase family. As to quaternary structure, homodimer. The cofactor is Mg(2+).

Its subcellular location is the cytoplasm. It carries out the reaction IMP + L-aspartate + GTP = N(6)-(1,2-dicarboxyethyl)-AMP + GDP + phosphate + 2 H(+). It functions in the pathway purine metabolism; AMP biosynthesis via de novo pathway; AMP from IMP: step 1/2. Its function is as follows. Plays an important role in the de novo pathway of purine nucleotide biosynthesis. Catalyzes the first committed step in the biosynthesis of AMP from IMP. This chain is Adenylosuccinate synthetase, found in Campylobacter curvus (strain 525.92).